The sequence spans 694 residues: Elongation factor G (694 aa).

One can recognise a tr-type G domain in the interval Glu8–Thr287. GTP-binding positions include Ala17–Thr24, Asp86–His90, and Asn140–Asp143.

Belongs to the TRAFAC class translation factor GTPase superfamily. Classic translation factor GTPase family. EF-G/EF-2 subfamily.

It is found in the cytoplasm. In terms of biological role, catalyzes the GTP-dependent ribosomal translocation step during translation elongation. During this step, the ribosome changes from the pre-translocational (PRE) to the post-translocational (POST) state as the newly formed A-site-bound peptidyl-tRNA and P-site-bound deacylated tRNA move to the P and E sites, respectively. Catalyzes the coordinated movement of the two tRNA molecules, the mRNA and conformational changes in the ribosome. This Brucella abortus (strain S19) protein is Elongation factor G.